The primary structure comprises 115 residues: Large ribosomal subunit protein uL18 (115 aa).

It belongs to the universal ribosomal protein uL18 family. As to quaternary structure, part of the 50S ribosomal subunit; part of the 5S rRNA/L5/L18/L25 subcomplex. Contacts the 5S and 23S rRNAs.

In terms of biological role, this is one of the proteins that bind and probably mediate the attachment of the 5S RNA into the large ribosomal subunit, where it forms part of the central protuberance. In Rickettsia rickettsii (strain Iowa), this protein is Large ribosomal subunit protein uL18.